The following is a 200-amino-acid chain: Male-specific histamine-binding salivary protein (200 aa).

An N-terminal signal peptide occupies residues 1 to 18 (MKVLLLVLGAALCQNADA). Residues serine 37, aspartate 41, aspartate 56, and tryptophan 59 each coordinate histamine. Disulfide bonds link cysteine 65/cysteine 193 and cysteine 137/cysteine 169. An N-linked (GlcNAc...) asparagine glycan is attached at asparagine 79. Residues glutamate 97, tyrosine 115, phenylalanine 125, aspartate 138, glutamate 154, and tryptophan 156 each coordinate histamine.

This sequence belongs to the calycin superfamily. Histamine-binding salivary protein family. As to quaternary structure, homodimer; disulcde-linked. Post-translationally, N-glycosylated. As to expression, expressed in salivary glands.

The protein resides in the secreted. In terms of biological role, salivary tick protein that acts by scavenging histamine at the wound site, outcompeting histamine receptors for histamine, thereby overcoming host inflammatory responses. Binds histamine with a high-affinity (Kd=1.2 nM). Contains two binding histamine sites (H and L), that appear to bind histamine with differing affinities. This Rhipicephalus appendiculatus (Brown ear tick) protein is Male-specific histamine-binding salivary protein.